Consider the following 89-residue polypeptide: Small ribosomal subunit protein uS17 (89 aa).

Belongs to the universal ribosomal protein uS17 family. As to quaternary structure, part of the 30S ribosomal subunit.

One of the primary rRNA binding proteins, it binds specifically to the 5'-end of 16S ribosomal RNA. The protein is Small ribosomal subunit protein uS17 of Xylella fastidiosa (strain Temecula1 / ATCC 700964).